The following is a 382-amino-acid chain: Acetyltransferase eriL (382 aa).

Helical transmembrane passes span 5 to 25 (LQPLPGGLQVAVQACLFLGAV), 33 to 53 (ALLFPPVLAMSLYMLLYTTTG), 59 to 79 (IVTWSLITTSLLQGSDILLIN), 146 to 166 (TLFYFVVLDLVHTFIVLSPVF), 192 to 212 (LWSYMSFGYSAASVVLVALGV), and 335 to 355 (GYMWTFLWFVFTLPHWMDPQF).

Belongs to the wax synthase family.

The protein resides in the membrane. It catalyses the reaction cyathatriol + acetyl-CoA = 11-O-acetylcyathatriol + CoA. It carries out the reaction cyathin A3 + acetyl-CoA = 11-O-acetylcyathin A3 + CoA. The protein operates within secondary metabolite biosynthesis. Acetyltransferase; part of the gene cluster that mediates the biosynthesis of erinacines, cyathane-xylosides that show unique biological activities, including leishmanicidal activity, stimulating activity for nerve growth-factor synthesis, and agonistic activity toward the kappa opioid receptor. Within the pathway, eriL converts cyathatriol into 11-O-acetyl-cyathatriol. EriL is also able to acetylate cyathin A3 to produce 11-O-acetylcyathin A3. The first step of the erinacines biosynthesis pathway is catalyzed by the geranylgeranyl diphosphate (GGPP) synthase eriE via conversion of farnesyl pyrophosphate and isopentyl pyrophosphate into geranylgeranyl pyrophosphate (GGPP). GGPP is then substrate of the diterpene cyclase eriG for the production of cyatha-3,12-diene. The cytochrome P450 monooxygenase eriI then hydroxylates cyatha-3,12-diene at C-14 of the seven-membered ring to produce erinacol, which is further hydroxylated at C-15 by the cytochrome P450 monooxygenase eriC to yield cyathadiol. The cytochrome P450 monooxygenase eriA then catalyzes C-11 hydroxylation in the presence of the short chain dehydrogenase/reductase (SDR) eriH, which leads to the production of cyathatriol. The acetyltransferase eriL converts cyathatriol into 11-O-acetyl-cyathatriol. The SDR eriH catalyzes further oxidation of 11-O-acetyl-cyathatriol into 1-O-acetylcyathin A3. Finally, the glycosyl transferase eriJ tranfers xylose from UDP-xylose onto C-14 of 11-O-acetyl-cyathatriol to form eracine Q. EriJ is also able to convert 11-O-acetyl-cyathatriol to eracine Q2 by using UDP-D-glucose as cosubstrate, but at a lower rate. The chain is Acetyltransferase eriL from Hericium erinaceus (Lion's mane mushroom).